A 127-amino-acid polypeptide reads, in one-letter code: MILLQAYEGLVPTLHSIIELCGKYRLRRSRDSSVCGWCIIRKDCFARRAWLNQPKSRKPKPPSSSLDLHNFCQATHEIFLLFSQELHQNSVIALVNFLHSSFESRKHDIAYTGKAIAIDFSSTSFPP.

The protein localises to the mitochondrion. This is an uncharacterized protein from Arabidopsis thaliana (Mouse-ear cress).